Consider the following 312-residue polypeptide: MDGDNQSENSQFLLLGISESPEQQRILFWMFLSMYLVTVLGNVLIILAISSDSHLHTPMYFFLANLSFTDLFFVTNTIPKMLVNFQSQNKAISYAGCLTQLYFLVSLVTLDNLILAVMAYDRYVATCCPLHYVTAMSPGLCVLLLSLCWGLSVLYGLLLTFLLTRVTFCGPREIHYLFCDMYILLWLACSNTHIIHTALIATGCFIFLTPLGFMTTSYVRIVRTILQMPSASKKYKTFSTCASHLGVVSLFYGTLAMVYLQPLHTYSMKDSVATVMYAVLTPMMNPFIYRLRNKDMHGAPGRVLWRPFQRPK.

At 1–25 (MDGDNQSENSQFLLLGISESPEQQR) the chain is on the extracellular side. N5 carries an N-linked (GlcNAc...) asparagine glycan. A helical transmembrane segment spans residues 26–49 (ILFWMFLSMYLVTVLGNVLIILAI). Residues 50–57 (SSDSHLHT) are Cytoplasmic-facing. Residues 58–79 (PMYFFLANLSFTDLFFVTNTIP) traverse the membrane as a helical segment. At 80 to 100 (KMLVNFQSQNKAISYAGCLTQ) the chain is on the extracellular side. Cysteines 97 and 189 form a disulfide. Residues 101-120 (LYFLVSLVTLDNLILAVMAY) form a helical membrane-spanning segment. Residues 121 to 140 (DRYVATCCPLHYVTAMSPGL) are Cytoplasmic-facing. Residues 141 to 158 (CVLLLSLCWGLSVLYGLL) form a helical membrane-spanning segment. The Extracellular portion of the chain corresponds to 159–196 (LTFLLTRVTFCGPREIHYLFCDMYILLWLACSNTHIIH). The helical transmembrane segment at 197–220 (TALIATGCFIFLTPLGFMTTSYVR) threads the bilayer. Over 221 to 237 (IVRTILQMPSASKKYKT) the chain is Cytoplasmic. Residues 238–260 (FSTCASHLGVVSLFYGTLAMVYL) form a helical membrane-spanning segment. The Extracellular segment spans residues 261–271 (QPLHTYSMKDS). Residues 272–291 (VATVMYAVLTPMMNPFIYRL) traverse the membrane as a helical segment. Over 292 to 312 (RNKDMHGAPGRVLWRPFQRPK) the chain is Cytoplasmic.

It belongs to the G-protein coupled receptor 1 family.

The protein resides in the cell membrane. Odorant receptor. This chain is Olfactory receptor 1D5 (OR1D5), found in Homo sapiens (Human).